The primary structure comprises 208 residues: Uracil phosphoribosyltransferase (208 aa).

Residues Arg-78, Arg-103, and 130-138 (DPMLATANS) contribute to the 5-phospho-alpha-D-ribose 1-diphosphate site. Uracil-binding positions include Ile-193 and 198-200 (GDA). Asp-199 serves as a coordination point for 5-phospho-alpha-D-ribose 1-diphosphate.

Belongs to the UPRTase family. The cofactor is Mg(2+).

The catalysed reaction is UMP + diphosphate = 5-phospho-alpha-D-ribose 1-diphosphate + uracil. It participates in pyrimidine metabolism; UMP biosynthesis via salvage pathway; UMP from uracil: step 1/1. With respect to regulation, allosterically activated by GTP. Functionally, catalyzes the conversion of uracil and 5-phospho-alpha-D-ribose 1-diphosphate (PRPP) to UMP and diphosphate. This chain is Uracil phosphoribosyltransferase, found in Brucella ovis (strain ATCC 25840 / 63/290 / NCTC 10512).